A 140-amino-acid polypeptide reads, in one-letter code: Type II secretion system core protein G (140 aa).

Residues 1 to 6 constitute a propeptide, leader sequence; that stretch reads MQRQRG. N-methylphenylalanine is present on F7. Residues 7 to 27 form a helical membrane-spanning segment; sequence FTLLEIMVVIVILGVLASLVV. The tract at residues 120 to 140 is disordered; sequence LGPDGVPESNDDIGNWTIGKK.

The protein belongs to the GSP G family. As to quaternary structure, type II secretion system is composed of four main components: the outer membrane complex, the inner membrane complex, the cytoplasmic secretion ATPase and the periplasm-spanning pseudopilus. Forms homomultimers. In terms of processing, cleaved by the prepilin peptidase. Post-translationally, methylated by prepilin peptidase at the amino group of the N-terminal phenylalanine once the leader sequence is cleaved.

It localises to the cell inner membrane. Core component of the type II secretion system required for the energy-dependent secretion of extracellular factors such as proteases and toxins from the periplasm. Pseudopilin (pilin-like) protein that polymerizes to form the pseudopilus. Further polymerization triggers pseudopilus growth. This Klebsiella pneumoniae protein is Type II secretion system core protein G (pulG).